The primary structure comprises 442 residues: Tryptophan synthase beta chain 2 (442 aa).

K122 carries the N6-(pyridoxal phosphate)lysine modification.

Belongs to the TrpB family. In terms of assembly, tetramer of two alpha and two beta chains. Pyridoxal 5'-phosphate is required as a cofactor.

The enzyme catalyses (1S,2R)-1-C-(indol-3-yl)glycerol 3-phosphate + L-serine = D-glyceraldehyde 3-phosphate + L-tryptophan + H2O. Its pathway is amino-acid biosynthesis; L-tryptophan biosynthesis; L-tryptophan from chorismate: step 5/5. In terms of biological role, the beta subunit is responsible for the synthesis of L-tryptophan from indole and L-serine. The protein is Tryptophan synthase beta chain 2 (trpB2) of Methanosarcina acetivorans (strain ATCC 35395 / DSM 2834 / JCM 12185 / C2A).